A 749-amino-acid polypeptide reads, in one-letter code: Protein kinase domain-containing protein ppk32 (749 aa).

Residues 21-317 (IQKENSVQVG…MFELERSPYF (297 aa)) enclose the Protein kinase domain. 2 disordered regions span residues 598-677 (KKLQ…VTAK) and 706-749 (PLIP…KSLL). Residues 602-651 (SKPSSVVPNRITTDPFSSQTKEATSKPSSISPNKATTNIFTSQASLSSQG) are compositionally biased toward polar residues. Phosphoserine is present on S632. Low complexity-rich tracts occupy residues 657-670 (SSAS…QRAS) and 721-735 (NRRV…NTVT).

Its subcellular location is the cytoplasm. In Schizosaccharomyces pombe (strain 972 / ATCC 24843) (Fission yeast), this protein is Protein kinase domain-containing protein ppk32 (ppk32).